The sequence spans 178 residues: Peptide deformylase (178 aa).

2 residues coordinate Fe cation: cysteine 96 and histidine 138. Glutamate 139 is a catalytic residue. Histidine 142 provides a ligand contact to Fe cation.

Belongs to the polypeptide deformylase family. Requires Fe(2+) as cofactor.

It catalyses the reaction N-terminal N-formyl-L-methionyl-[peptide] + H2O = N-terminal L-methionyl-[peptide] + formate. Functionally, removes the formyl group from the N-terminal Met of newly synthesized proteins. Requires at least a dipeptide for an efficient rate of reaction. N-terminal L-methionine is a prerequisite for activity but the enzyme has broad specificity at other positions. In Bartonella tribocorum (strain CIP 105476 / IBS 506), this protein is Peptide deformylase.